Here is a 117-residue protein sequence, read N- to C-terminus: Ribosome-binding factor A (117 aa).

It belongs to the RbfA family. As to quaternary structure, monomer. Binds 30S ribosomal subunits, but not 50S ribosomal subunits or 70S ribosomes.

The protein localises to the cytoplasm. One of several proteins that assist in the late maturation steps of the functional core of the 30S ribosomal subunit. Associates with free 30S ribosomal subunits (but not with 30S subunits that are part of 70S ribosomes or polysomes). Required for efficient processing of 16S rRNA. May interact with the 5'-terminal helix region of 16S rRNA. The protein is Ribosome-binding factor A of Nitrosomonas europaea (strain ATCC 19718 / CIP 103999 / KCTC 2705 / NBRC 14298).